Reading from the N-terminus, the 749-residue chain is Cytosolic phospholipase A2 (749 aa).

Residues 1–178 (MSFIDPYQHI…MKKLLGPKNS (178 aa)) are phospholipid binding. At Ser-2 the chain carries Phosphoserine. The region spanning 6–122 (PYQHIIVEHQ…KVGEKKEVPF (117 aa)) is the C2 domain. Residues Asp-40, Thr-41, Asp-43, Asn-65, Asp-93, Ala-94, and Asn-95 each coordinate Ca(2+). In terms of domain architecture, PLA2c spans 140–740 (SCPDLRFSMA…SNVEARRFFN (601 aa)). Ser-228 acts as the Nucleophile in catalysis. The residue at position 268 (Thr-268) is a Phosphothreonine. A disordered region spans residues 409–457 (GSQSRGSTMEEELENITTKHIVSNDSSDSDDESHEPKGTENEDAGSDYQ). Phosphoserine is present on residues Ser-434, Ser-435, and Ser-437. At Ser-505 the chain carries Phosphoserine; by MAPK. Ser-515 carries the post-translational modification Phosphoserine. A Glycyl lysine isopeptide (Lys-Gly) (interchain with G-Cter in SUMO2) cross-link involves residue Lys-541. Asp-549 functions as the Proton acceptor in the catalytic mechanism. A Glycyl lysine isopeptide (Lys-Gly) (interchain with G-Cter in SUMO2) cross-link involves residue Lys-606. Phosphoserine occurs at positions 727 and 729.

Interacts with KAT5. Post-translationally, phosphorylated at both Ser-505 and Ser-727 in response to mitogenic stimuli. As to expression, expressed in various cells and tissues such as macrophages, neutrophils, fibroblasts and lung endothelium. Expressed in platelets (at protein level).

The protein localises to the cytoplasm. The protein resides in the golgi apparatus membrane. It localises to the nucleus envelope. The enzyme catalyses a 1,2-diacyl-sn-glycero-3-phosphocholine + H2O = a 1-acyl-sn-glycero-3-phosphocholine + a fatty acid + H(+). The catalysed reaction is a 1-O-alkyl-2-acyl-sn-glycero-3-phosphocholine + H2O = a 1-O-alkyl-sn-glycero-3-phosphocholine + a fatty acid + H(+). It carries out the reaction a 1-acyl-sn-glycero-3-phosphocholine + H2O = sn-glycerol 3-phosphocholine + a fatty acid + H(+). It catalyses the reaction 1-hexadecanoyl-2-(5Z,8Z,11Z,14Z-eicosatetraenoyl)-sn-glycero-3-phosphocholine + H2O = 1-hexadecanoyl-sn-glycero-3-phosphocholine + (5Z,8Z,11Z,14Z)-eicosatetraenoate + H(+). The enzyme catalyses 1,2-di-(5Z,8Z,11Z,14Z-eicosatetraenoyl)-sn-glycero-3-phosphocholine + H2O = 1-(5Z,8Z,11Z,14Z-eicosatetraenoyl)-sn-glycero-3-phosphocholine + (5Z,8Z,11Z,14Z)-eicosatetraenoate + H(+). The catalysed reaction is 1-octadecanoyl-2-(5Z,8Z,11Z,14Z-eicosatetraenoyl)-sn-glycero-3-phosphocholine + H2O = 1-octadecanoyl-sn-glycero-3-phosphocholine + (5Z,8Z,11Z,14Z)-eicosatetraenoate + H(+). It carries out the reaction 1-hexadecanoyl-2-(9Z,12Z-octadecadienoyl)-sn-glycero-3-phosphocholine + H2O = (9Z,12Z)-octadecadienoate + 1-hexadecanoyl-sn-glycero-3-phosphocholine + H(+). It catalyses the reaction 1-octadecanoyl-2-(9Z,12Z,15Z-octadecatrienoyl)-sn-glycero-3-phosphocholine + H2O = (9Z,12Z,15Z)-octadecatrienoate + 1-octadecanoyl-sn-glycero-3-phosphocholine + H(+). The enzyme catalyses 1-(5Z,8Z,11Z,14Z-eicosatetraenoyl)-2-hexadecanoyl-sn-glycero-3-phosphocholine + H2O = 1-(5Z,8Z,11Z,14Z-eicosatetraenoyl)-sn-glycero-3-phosphocholine + hexadecanoate + H(+). The catalysed reaction is 1-O-hexadecyl-2-(5Z,8Z,11Z,14Z)-eicosatetraenoyl-sn-glycero-3-phosphocholine + H2O = 1-O-hexadecyl-sn-glycero-3-phosphocholine + (5Z,8Z,11Z,14Z)-eicosatetraenoate + H(+). It carries out the reaction 1,2-di-(9Z-octadecenoyl)-sn-glycero-3-phospho-(1'-sn-glycerol) + H2O = 1-(9Z-octadecenoyl)-sn-glycero-3-phospho-(1'-sn-glycerol) + (9Z)-octadecenoate + H(+). It catalyses the reaction 1-octadecanoyl-2-(5Z,8Z,11Z,14Z-eicosatetraenoyl)-sn-glycero-3-phosphate + H2O = 1-octadecanoyl-sn-glycero-3-phosphate + (5Z,8Z,11Z,14Z)-eicosatetraenoate + H(+). The enzyme catalyses 1-hexadecanoyl-sn-glycero-3-phosphocholine + H2O = sn-glycerol 3-phosphocholine + hexadecanoate + H(+). The catalysed reaction is 2-(prostaglandin E2)-sn-glycero-3-phosphoethanolamine + H2O = sn-glycero-3-phosphoethanolamine + prostaglandin E2 + H(+). It carries out the reaction 2-[(15S)-hydroxy-(5Z,8Z,11Z,13E)-eicosatetraenoyl]-sn-glycero-3-phosphocholine + H2O = (15S)-hydroxy-(5Z,8Z,11Z,13E)-eicosatetraenoate + sn-glycerol 3-phosphocholine + H(+). It catalyses the reaction 2-[(15R)-hydroxy-(5Z,8Z,11Z,13E)-eicosatetraenoyl]-sn-glycero-3-phosphocholine + H2O = (15R)-hydroxy-(5Z,8Z,11Z,13E)-eicosatetraenoate + sn-glycerol 3-phosphocholine + H(+). The enzyme catalyses 2-(prostaglandin E2)-sn-glycero-3-phosphocholine + H2O = prostaglandin E2 + sn-glycerol 3-phosphocholine + H(+). The catalysed reaction is 2-[(11R)-hydroxy-(5Z,8Z,12E,14Z)-eicosatetraenoyl]-sn-glycero-3-phosphocholine + H2O = (11R)-hydroxy-(5Z,8Z,12E,14Z)-eicosatetraenoate + sn-glycerol 3-phosphocholine + H(+). It carries out the reaction 1-(5Z,8Z,11Z,14Z-eicosatetraenoyl)-2-O-hexadecyl-sn-glycero-3-phosphocholine + H2O = 2-O-hexadecyl-sn-glycero-3-phosphocholine + (5Z,8Z,11Z,14Z)-eicosatetraenoate + H(+). It catalyses the reaction 1-octadecanoyl-2-(5Z,8Z,11Z,14Z-eicosatetraenoyl)-sn-glycero-3-phosphocholine + glycerol = 1-(5Z,8Z,11Z,14Z-eicosatetraenoyl)-glycerol + 1-octadecanoyl-sn-glycero-3-phosphocholine. The enzyme catalyses 1-octadecanoyl-2-(9Z,12Z,15Z-octadecatrienoyl)-sn-glycero-3-phosphocholine + glycerol = 1-(9Z,12Z,15Z-octadecatrienoyl)-glycerol + 1-octadecanoyl-sn-glycero-3-phosphocholine. The protein operates within membrane lipid metabolism; glycerophospholipid metabolism. It participates in lipid metabolism; arachidonate metabolism. Its pathway is lipid metabolism; prostaglandin biosynthesis. It functions in the pathway lipid metabolism; leukotriene B4 biosynthesis. Its activity is regulated as follows. Activated by cytosolic calcium, which is necessary for binding to membrane lipids. Activated by phosphorylation in response to mitogenic stimuli. Activated by ceramide-1-phosphate. Binding (via C2 domain) to ceramide-1-phosphate increases the affinity for membrane lipids. Can be activated by phosphoinositides in the absence of calcium. Inhibited by ANXA5 in a calcium- and substrate-dependent way. Functionally, has primarily calcium-dependent phospholipase and lysophospholipase activities, with a major role in membrane lipid remodeling and biosynthesis of lipid mediators of the inflammatory response. Plays an important role in embryo implantation and parturition through its ability to trigger prostanoid production. Preferentially hydrolyzes the ester bond of the fatty acyl group attached at sn-2 position of phospholipids (phospholipase A2 activity). Selectively hydrolyzes sn-2 arachidonoyl group from membrane phospholipids, providing the precursor for eicosanoid biosynthesis via the cyclooxygenase pathway. In an alternative pathway of eicosanoid biosynthesis, hydrolyzes sn-2 fatty acyl chain of eicosanoid lysophopholipids to release free bioactive eicosanoids. Hydrolyzes the ester bond of the fatty acyl group attached at sn-1 position of phospholipids (phospholipase A1 activity) only if an ether linkage rather than an ester linkage is present at the sn-2 position. This hydrolysis is not stereospecific. Has calcium-independent phospholipase A2 and lysophospholipase activities in the presence of phosphoinositides. Has O-acyltransferase activity. Catalyzes the transfer of fatty acyl chains from phospholipids to a primary hydroxyl group of glycerol (sn-1 or sn-3), potentially contributing to monoacylglycerol synthesis. In Homo sapiens (Human), this protein is Cytosolic phospholipase A2 (PLA2G4A).